Consider the following 334-residue polypeptide: Methionine adenosyltransferase 2 subunit beta (334 aa).

NADP(+)-binding positions include 37–40, 60–62, 71–72, Cys-93, Arg-97, and Tyr-159; these read TGLL, YSR, and NL. The required for interaction with MAT2A stretch occupies residues 319 to 334; sequence LWPFLVDKRWRQTVFH.

The protein belongs to the dTDP-4-dehydrorhamnose reductase family. MAT2B subfamily. Heterotrimer; composed of a catalytic mat2a homodimer that binds one regulatory mat2b chain. Heterohexamer; composed of a central, catalytic mat2a homotetramer flanked on either side by a regulatory mat2b chain. NADP binding increases the affinity for mat2a.

It participates in amino-acid biosynthesis; S-adenosyl-L-methionine biosynthesis; S-adenosyl-L-methionine from L-methionine: step 1/1. Its function is as follows. Regulatory subunit of S-adenosylmethionine synthetase 2, an enzyme that catalyzes the formation of S-adenosylmethionine from methionine and ATP. Regulates MAT2A catalytic activity by changing its kinetic properties, increasing its affinity for L-methionine. Can bind NADP (in vitro). The sequence is that of Methionine adenosyltransferase 2 subunit beta (mat2b) from Xenopus laevis (African clawed frog).